A 772-amino-acid chain; its full sequence is MALATLDWMSKDAERLAQCNHDHPQAVLGPQQLEDGRWVVRVWMPEASRVVLLHQGHEHALENPHHAWIFEGELSSNPGSQYRLRVERAGITHEQHDPYAFRQEWMGAMDRHLFAEGNHHHIWQRMGAHPHLQDGVAGVQFCLWAPNARSVSVIGDCTNWDGRHLPMQQRIGGIWELFVPGLGAGAHYKYEIHTQQGHCYEKADPYGFQHEVRPAQASVVASLKGYQWGDDAWLKQRDNRNPLEQPVSVYEMHMGSWMHGSWDEPYIEADGTPRAPVPAADLKPGARLLTYPELADRVIPYVKARGFTHIELMPMAEHPFDGSWGYQVTGFYAPTSRFGTLDEFRAFVDRCHAEGIGVILDWVPGHFPKDAHGLAFFDGSHLYEHGDPRIGEHKEWGTLIFNYSRNEVRNFLVANLVFWFEELHIDGIRVDAVASMLYRDYLRPDGEWIANEHGGRENLEAVRFLQQANSVLFHYFPGALSIAEESTTWPLVTMPTSMGGLGFNLKWNMGWMHDMLDYFELDHWFRQFHQNNITFSIWYAHTENFMLALSHDEVVHGKSHLLHKMPGSDELKFANVRALLTYMWTHPGKKTIFMGMEFAQRGEWNVWGDLEWDKLQFPEHQGVVNLVDDLNALYKSEPALWRNDFDSFGFQWIDCDDTNHSVVSFMRRDEKEGNWVVVVCNFTPEGHGNYRIGVPVDGFYTELFNSDGARYGGSNQGNLGGKFSDDWGMHSYGQSLDLCLPPLTVMVFKHDPNRQREAAKDEAAAKLGGSLG.

Aspartate 431 functions as the Nucleophile in the catalytic mechanism. The Proton donor role is filled by glutamate 484.

The protein belongs to the glycosyl hydrolase 13 family. GlgB subfamily. In terms of assembly, monomer.

The enzyme catalyses Transfers a segment of a (1-&gt;4)-alpha-D-glucan chain to a primary hydroxy group in a similar glucan chain.. It functions in the pathway glycan biosynthesis; glycogen biosynthesis. In terms of biological role, catalyzes the formation of the alpha-1,6-glucosidic linkages in glycogen by scission of a 1,4-alpha-linked oligosaccharide from growing alpha-1,4-glucan chains and the subsequent attachment of the oligosaccharide to the alpha-1,6 position. This is 1,4-alpha-glucan branching enzyme GlgB from Synechococcus sp. (strain RCC307).